Here is a 428-residue protein sequence, read N- to C-terminus: MKKPFYKVLYVQVIFAIVVGVILGHYYPSLAVDMKPLGDGFIKLIKMVIGPIIFCTVVTGIAGMQDMKKVGRVGGKALLYFEIVSTCALVLGLAATHILRPGVGFNIDPATLNGKEVASYAAKAHGQSSVDFLMHIIPNTMIDAFAQGEILQILLIALLFGSVLAHLGERGRVVTDFIDGITRVLFGIVHIVTKLAPIGAFGAMAFTIGKYGVGSLVPLLKLIGTFYLTSVVFVLVVLGAIARFTGFSIIRFVGYIKEELLIVLGTSSSEAALPQLMEKLEKAGCSRSVVGLVVPTGYSFNLDGTNIYMTMAVLFIAQATNIELTWMQQLTLLAVAMLTSKGASGVTGAGFITLAATLAVVPTIPLSGMVLILGIDRFMSECRALTNIVGNGVATVVVSAWEKELDRAKLRAALSGNGEAAAGEAARV.

A run of 8 helical transmembrane segments spans residues 8–28 (VLYV…HYYP), 44–64 (LIKM…IAGM), 78–98 (LLYF…ATHI), 148–168 (GEIL…AHLG), 184–204 (VLFG…FGAM), 222–242 (LIGT…GAIA), 307–327 (IYMT…LTWM), and 355–375 (AATL…ILGI).

Belongs to the dicarboxylate/amino acid:cation symporter (DAACS) (TC 2.A.23) family.

It is found in the cell inner membrane. Its function is as follows. Responsible for the transport of dicarboxylates such as succinate, fumarate, and malate from the periplasm across the membrane. The sequence is that of C4-dicarboxylate transport protein from Burkholderia pseudomallei (strain 1106a).